A 104-amino-acid chain; its full sequence is Large ribosomal subunit protein uL23 (104 aa).

The protein belongs to the universal ribosomal protein uL23 family. As to quaternary structure, part of the 50S ribosomal subunit. Contacts protein L29, and trigger factor when it is bound to the ribosome.

One of the early assembly proteins it binds 23S rRNA. One of the proteins that surrounds the polypeptide exit tunnel on the outside of the ribosome. Forms the main docking site for trigger factor binding to the ribosome. This is Large ribosomal subunit protein uL23 from Ralstonia nicotianae (strain ATCC BAA-1114 / GMI1000) (Ralstonia solanacearum).